Reading from the N-terminus, the 152-residue chain is Methylglyoxal synthase (152 aa).

In terms of domain architecture, MGS-like spans 6 to 152 (RTMATAKNIA…YQHYLNGRLK (147 aa)). Residues H19, K23, 45–48 (TGTT), and 65–66 (SG) contribute to the substrate site. The active-site Proton donor/acceptor is the D71. Residue H98 participates in substrate binding.

Belongs to the methylglyoxal synthase family.

The enzyme catalyses dihydroxyacetone phosphate = methylglyoxal + phosphate. Catalyzes the formation of methylglyoxal from dihydroxyacetone phosphate. The chain is Methylglyoxal synthase from Photorhabdus laumondii subsp. laumondii (strain DSM 15139 / CIP 105565 / TT01) (Photorhabdus luminescens subsp. laumondii).